The chain runs to 180 residues: WPP domain-containing protein 2 (180 aa).

Positions 1 to 26 (MAETAETINTTISSPPPESESSTTIS) are enriched in low complexity. Disordered stretches follow at residues 1 to 61 (MAET…LRIW) and 140 to 180 (SVKA…KSEA). A compositionally biased stretch (polar residues) spans 27 to 36 (AMTDPTSQEA). Basic and acidic residues predominate over residues 37 to 53 (ASKDTDLTKEAESEKKP). The segment at 44–147 (TKEAESEKKP…LESVKARSNA (104 aa)) is WPP. At serine 173 the chain carries Phosphoserine.

As to quaternary structure, binds to FPP proteins. Interacts with WAP, WIP1, WIP2 and WIP3 through its WPP domain. Interacts with WIT1 and HSP70-1. As to expression, expressed in roots, stems, leaves and flowers.

It localises to the nucleus envelope. The protein resides in the cytoplasm. Its subcellular location is the nucleus. It is found in the golgi apparatus. Regulates the mitotic activity in roots. Plays a role with HSP70-1 in facilitating WIT1 nuclear envelope targeting. This chain is WPP domain-containing protein 2 (WPP2), found in Arabidopsis thaliana (Mouse-ear cress).